Consider the following 222-residue polypeptide: Elongation factor 1-beta' (222 aa).

Residues 71–113 (SQGTSPLTAGAKPTAPAPAAKDDDDDDVDLFGSGDEEEDAEAE) are disordered. The span at 78-89 (TAGAKPTAPAPA) shows a compositional bias: low complexity. Acidic residues predominate over residues 92–111 (DDDDDDVDLFGSGDEEEDAE).

Belongs to the EF-1-beta/EF-1-delta family. In terms of assembly, EF-1 is composed of 4 subunits: alpha, beta, beta' and gamma. Post-translationally, phosphorylated.

EF-1-beta and EF-1-beta' stimulate the exchange of GDP bound to EF-1-alpha to GTP. This chain is Elongation factor 1-beta', found in Bombyx mori (Silk moth).